The chain runs to 96 residues: Protein transport protein Sec61 subunit beta (96 aa).

Positions 1–17 (MPGPTPSGTNVGSSGRS) are enriched in polar residues. A disordered region spans residues 1 to 54 (MPGPTPSGTNVGSSGRSPSKAVAARAAGSTVRQRKNASCGTRSAGRTTSAGTGG). Pro2 bears the N-acetylproline mark. Topologically, residues 2–71 (PGPTPSGTNV…DSPGLKVGPV (70 aa)) are cytoplasmic. Ser7 is subject to Phosphoserine. The residue at position 9 (Thr9) is a Phosphothreonine. A phosphoserine mark is found at Ser13, Ser14, and Ser17. Residue Cys39 is the site of S-palmitoyl cysteine attachment. A compositionally biased stretch (low complexity) spans 40–50 (GTRSAGRTTSA). A helical membrane pass occupies residues 72–91 (PVLVMSLLFIASVFMLHIWG). Residues 92–96 (KYTRS) lie on the Lumenal side of the membrane.

It belongs to the SEC61-beta family. In terms of assembly, the SEC61 channel-forming translocon complex consists of channel-forming core components SEC61A1, SEC61B and SEC61G and different auxiliary components such as SEC62 and SEC63. The SEC61 channel associates with the multi-pass translocon (MPT) complex. Interacts with TRAM1.

It localises to the endoplasmic reticulum membrane. Component of SEC61 channel-forming translocon complex that mediates transport of signal peptide-containing precursor polypeptides across the endoplasmic reticulum (ER). Forms a ribosome receptor and a gated pore in the ER membrane, both functions required for cotranslational translocation of nascent polypeptides. The SEC61 channel is also involved in ER membrane insertion of transmembrane proteins: it mediates membrane insertion of the first few transmembrane segments of proteins, while insertion of subsequent transmembrane regions of multi-pass membrane proteins is mediated by the multi-pass translocon (MPT) complex. The SEC61 channel cooperates with the translocating protein TRAM1 to import nascent proteins into the ER. In Canis lupus familiaris (Dog), this protein is Protein transport protein Sec61 subunit beta (SEC61B).